The sequence spans 719 residues: Homeobox protein SIX5 (719 aa).

Low complexity-rich tracts occupy residues 1–22 (MATS…AAAT) and 31–65 (QLLQ…GPGS). 2 disordered regions span residues 1–73 (MATS…VTEV) and 241–287 (WFKN…VASM). The homeobox DNA-binding region spans 194–253 (GEETVYCFKERSRAALKACYRGNRYPTPDEKRRLATLTGLSLTQVSNWFKNRRQRDRTGT). Basic and acidic residues predominate over residues 272–282 (ESSRSPEDLER).

It belongs to the SIX/Sine oculis homeobox family. As to quaternary structure, probably binds DNA dimer. Interacts with EYA3, and probably EYA1 and EYA2.

It is found in the nucleus. Its function is as follows. Transcription factor that is thought to be involved in regulation of organogenesis. May be involved in determination and maintenance of retina formation. Binds a 5'-GGTGTCAG-3' motif present in the ARE regulatory element of ATP1A1. Binds a 5'-TCA[AG][AG]TTNC-3' motif present in the MEF3 element in the myogenin promoter, and in the IGFBP5 promoter. Thought to be regulated by association with Dach and Eya proteins, and seems to be coactivated by EYA1, EYA2 and EYA3. This Mus musculus (Mouse) protein is Homeobox protein SIX5 (Six5).